The following is a 67-amino-acid chain: Ferredoxin (67 aa).

2 4Fe-4S ferredoxin-type domains span residues 3-31 (WKVS…MNDE) and 36-67 (PKVE…IEEA). Cysteine 12, aspartate 15, and cysteine 18 together coordinate [4Fe-4S] cluster. Cysteine 22 and cysteine 49 are oxidised to a cystine. Cysteine 57 lines the [4Fe-4S] cluster pocket.

In terms of assembly, homodimer. It depends on [4Fe-4S] cluster as a cofactor. The cofactor is [3Fe-4S] cluster.

Its function is as follows. Ferredoxins are iron-sulfur proteins that transfer electrons in a wide variety of metabolic reactions. In Pyrococcus furiosus (strain ATCC 43587 / DSM 3638 / JCM 8422 / Vc1), this protein is Ferredoxin (fdxA).